A 99-amino-acid polypeptide reads, in one-letter code: METLSFEFAAGQPARGKALVGVVGSGDLEVLLEPGQAGKLAIQVVTSVNGAEQRWQQLFERMFREQTPPALNIDIHDFGATPGVVRLRLEQGLEEVGHD.

The residue at position 25 (serine 25) is an O-(phosphoribosyl dephospho-coenzyme A)serine.

This sequence belongs to the MdcC family. In terms of processing, covalently binds the prosthetic group of malonate decarboxylase.

The protein localises to the cytoplasm. Its function is as follows. Subunit of malonate decarboxylase, it is an acyl carrier protein to which acetyl and malonyl thioester residues are bound via a 2'-(5''-phosphoribosyl)-3'-dephospho-CoA prosthetic group and turn over during the catalytic mechanism. This chain is Malonate decarboxylase acyl carrier protein, found in Stutzerimonas stutzeri (strain A1501) (Pseudomonas stutzeri).